The chain runs to 340 residues: uncharacterized protein (340 aa).

This is an uncharacterized protein from Acanthamoeba polyphaga mimivirus (APMV).